A 298-amino-acid polypeptide reads, in one-letter code: uncharacterized protein (298 aa).

Asp-119 is a catalytic residue.

The protein belongs to the pseudouridine synthase RluA family.

The catalysed reaction is a uridine in RNA = a pseudouridine in RNA. This is an uncharacterized protein from Helicobacter pylori (strain ATCC 700392 / 26695) (Campylobacter pylori).